The primary structure comprises 112 residues: Small ribosomal subunit protein uS11c (112 aa).

The protein belongs to the universal ribosomal protein uS11 family. As to quaternary structure, part of the 30S ribosomal subunit.

The protein resides in the plastid. This is Small ribosomal subunit protein uS11c from Euglena longa (Euglenophycean alga).